A 247-amino-acid chain; its full sequence is Uridylate kinase (247 aa).

Lys-16–Gly-19 contributes to the ATP binding site. Residue Gly-58 coordinates UMP. Residues Gly-59 and Arg-63 each contribute to the ATP site. UMP is bound by residues Asp-78 and Thr-139–Thr-146. The ATP site is built by Thr-166, Tyr-172, and Asp-175.

The protein belongs to the UMP kinase family. In terms of assembly, homohexamer.

Its subcellular location is the cytoplasm. The catalysed reaction is UMP + ATP = UDP + ADP. It participates in pyrimidine metabolism; CTP biosynthesis via de novo pathway; UDP from UMP (UMPK route): step 1/1. Its activity is regulated as follows. Inhibited by UTP. Its function is as follows. Catalyzes the reversible phosphorylation of UMP to UDP. The sequence is that of Uridylate kinase from Xylella fastidiosa (strain 9a5c).